We begin with the raw amino-acid sequence, 187 residues long: Elongation factor P (187 aa).

It belongs to the elongation factor P family.

The protein localises to the cytoplasm. It functions in the pathway protein biosynthesis; polypeptide chain elongation. In terms of biological role, involved in peptide bond synthesis. Stimulates efficient translation and peptide-bond synthesis on native or reconstituted 70S ribosomes in vitro. Probably functions indirectly by altering the affinity of the ribosome for aminoacyl-tRNA, thus increasing their reactivity as acceptors for peptidyl transferase. The protein is Elongation factor P of Helicobacter hepaticus (strain ATCC 51449 / 3B1).